Here is a 325-residue protein sequence, read N- to C-terminus: Olfactory receptor 1S2 (325 aa).

The Extracellular segment spans residues 1–38 (MKTLCSFLQISRNMHQENQTTITEFILLGLSNQAEHQN). N18 carries N-linked (GlcNAc...) asparagine glycosylation. A helical membrane pass occupies residues 39 to 62 (LLFVLFLSMYVVTVVGNGLIIVAI). At 63–70 (SLDIYLHT) the chain is on the cytoplasmic side. The chain crosses the membrane as a helical span at residues 71 to 92 (PMYLFLAYLSFADISSISNSVP). Topologically, residues 93–113 (KMLVNIQTNSQSISYESCITQ) are extracellular. An intrachain disulfide couples C110 to C202. The chain crosses the membrane as a helical span at residues 114–133 (MYFSIVFVVTDNLLLGTMAF). The Cytoplasmic portion of the chain corresponds to 134–152 (DHFVAICHPLNYTTFMRAR). Residues 153–171 (FGTLLTVISWFLSNIIALT) form a helical membrane-spanning segment. The Extracellular segment spans residues 172-208 (HTLLLIQLLFCDHNTLPHFFCDLAPLLKLSCSDTMIN). A helical transmembrane segment spans residues 209 to 232 (ELVLFIVGLSVIIFPFVLIFFSYV). Residues 233–249 (CIIRAVLGVSSTQGKWK) lie on the Cytoplasmic side of the membrane. A helical transmembrane segment spans residues 250 to 272 (AFSTCGSHLTIALLFYGTTVGVY). The Extracellular portion of the chain corresponds to 273–285 (FFPSSTHPEDTDK). The helical transmembrane segment at 286-305 (IGAVLFTVVTPMMNPFIYSL) threads the bilayer. At 306 to 325 (RNKDMKGALRKLINRKISSL) the chain is on the cytoplasmic side.

The protein belongs to the G-protein coupled receptor 1 family.

The protein localises to the cell membrane. In terms of biological role, odorant receptor. This Homo sapiens (Human) protein is Olfactory receptor 1S2 (OR1S2).